Reading from the N-terminus, the 449-residue chain is VIRF-1 (449 aa).

The tract at residues Met-1–Asp-60 is disordered. Residues Lys-89–Lys-195 constitute a DNA-binding region (IRF tryptophan pentad repeat). N6-propionyllysine; by host occurs at positions 406 and 442.

Belongs to the IRF family. In terms of assembly, forms homodimers. Interacts with host IRF3, IRF7, and CREBBP. Interacts with host SYNCRIP. Interacts with host USP7. Interacts (via C-terminus) with host HERC5. Interacts with host GABARAPL1. Interacts with host SIRT6. Post-translationally, ISGylated. Propionylated in lysine residues Lys-406 and Lys-442, which is required for effective inhibition of IFN-beta production and antiviral signaling.

Its subcellular location is the host cytoplasm. In terms of biological role, plays a role in the inhibition of host innate response by repressing the expression of interferon-inducible genes and blocking host IRF1- and IRF3-mediated transcription. Blocks the interaction between host IRF3 and CREBBP. Regulates the host cellular metabolism by increasing glucose uptake, ATP production and lactate secretion through down-regulation of heterogeneous nuclear ribonuclear protein Q1/SYNCRIP. Mechanistically, induces ubiquitination and degradation of SYNCRIP through the ubiquitin-proteasome pathway by recruiting KLHL3/CUL3 ubiquitin ligase complex. Disrupts host TP53 signaling pathway during viral infection by interacting with host USP7 and thereby decreasing the availability of USP7 for deubiquitinating and stabilizing TP53. Plays a role in the global inhibition of protein ISGylation by interacting with host HERC5 leading to its inhibition. Promotes its own propionylation by blocking SIRT6 interaction with ubiquitin-specific peptidase 10/USP10 leading to SIRT6 degradation via a ubiquitin-proteasome pathway. In turn, propionylation is required to block IRF3-CBP/p300 recruitment and to repress the STING DNA sensing pathway. Plays a role in the activation of mitophagy during infection via interaction with the host proteins NIX/BNIP3L, TUFM and GABARAPL1 thereby inhibiting antiviral responses and contributing to productive replication. In Homo sapiens (Human), this protein is VIRF-1 (vIRF-1).